The sequence spans 989 residues: Atos homolog protein A (989 aa).

The tract at residues T24–T32 is transactivation domain 1 (TAD1). Disordered stretches follow at residues G244–G295, P393–T477, Q525–Q639, and E656–N686. Residues R254 to H270 are compositionally biased toward low complexity. The span at F397 to T412 shows a compositional bias: polar residues. 2 stretches are compositionally biased toward basic and acidic residues: residues Q413 to D423 and T460 to T471. Polar residues-rich tracts occupy residues Q525–S544 and T600–T638. Over residues E656 to E675 the composition is skewed to basic and acidic residues. A compositionally biased stretch (polar residues) spans P676–N686. The tract at residues L792 to Y849 is required for macropage invasion. Residues F876–K884 form a transactivation domain 2 (TAD2) region.

Belongs to the ATOS family.

It localises to the nucleus. Functionally, transcription regulator that syncronizes transcriptional and translational programs to promote macrophage invasion of tissues. The polypeptide is Atos homolog protein A (atosa) (Danio rerio (Zebrafish)).